Consider the following 191-residue polypeptide: dTTP/UTP pyrophosphatase (191 aa).

Asp68 functions as the Proton acceptor in the catalytic mechanism.

This sequence belongs to the Maf family. YhdE subfamily. Requires a divalent metal cation as cofactor.

The protein localises to the cytoplasm. It carries out the reaction dTTP + H2O = dTMP + diphosphate + H(+). It catalyses the reaction UTP + H2O = UMP + diphosphate + H(+). Its function is as follows. Nucleoside triphosphate pyrophosphatase that hydrolyzes dTTP and UTP. May have a dual role in cell division arrest and in preventing the incorporation of modified nucleotides into cellular nucleic acids. This chain is dTTP/UTP pyrophosphatase, found in Thermoanaerobacter pseudethanolicus (strain ATCC 33223 / 39E) (Clostridium thermohydrosulfuricum).